Consider the following 314-residue polypeptide: Ribonuclease Z (314 aa).

Zn(2+) contacts are provided by His60, His62, Asp64, His65, His140, Asp209, and His269. The active-site Proton acceptor is Asp64.

Belongs to the RNase Z family. In terms of assembly, homodimer. Requires Zn(2+) as cofactor.

It carries out the reaction Endonucleolytic cleavage of RNA, removing extra 3' nucleotides from tRNA precursor, generating 3' termini of tRNAs. A 3'-hydroxy group is left at the tRNA terminus and a 5'-phosphoryl group is left at the trailer molecule.. Functionally, zinc phosphodiesterase, which displays some tRNA 3'-processing endonuclease activity. Probably involved in tRNA maturation, by removing a 3'-trailer from precursor tRNA. The chain is Ribonuclease Z from Methanococcus maripaludis (strain C5 / ATCC BAA-1333).